Consider the following 514-residue polypeptide: Ribonuclease Y (514 aa).

The chain crosses the membrane as a helical span at residues 3–23; it reads VLWMVLGLAIGIAVGAAAGYI. Positions 203-266 constitute a KH domain; it reads TVKAVELPSD…EVARIAMERL (64 aa). Residues 330 to 423 enclose the HD domain; sequence VLAHSVEVAN…VATADAVSAA (94 aa).

It belongs to the RNase Y family.

The protein localises to the cell membrane. Endoribonuclease that initiates mRNA decay. The sequence is that of Ribonuclease Y from Rubrobacter xylanophilus (strain DSM 9941 / JCM 11954 / NBRC 16129 / PRD-1).